The sequence spans 228 residues: Urease accessory protein UreF (228 aa).

It belongs to the UreF family. UreD, UreF and UreG form a complex that acts as a GTP-hydrolysis-dependent molecular chaperone, activating the urease apoprotein by helping to assemble the nickel containing metallocenter of UreC. The UreE protein probably delivers the nickel.

The protein localises to the cytoplasm. Its function is as follows. Required for maturation of urease via the functional incorporation of the urease nickel metallocenter. In Yersinia pseudotuberculosis serotype IB (strain PB1/+), this protein is Urease accessory protein UreF.